The following is a 659-amino-acid chain: MPLNKLIQDGDNQDLTDERFKATFDTDALAAVFHGGEDALKRIRELRDEVTKRWHLFDALPGAHRTRAERMEDVSRKLKNLMESVGEFADFTNNLDMLVIIRDVMGIEGFPLALHNLMFVPTIQNQADDEQTEWWLMDALQGKIIGTYAQTELGHGTNLGAIETTATYDKLTEEFIIHTPTTTATKWWPGGLGTSCTHVVLVANLIIDTKNYGLHPFFVPIRDRNSYSVMSGVRVGDIGTKMGVNCVDNGFLAFDNYRIPRRNMLMKHSKVSKEGLYTAPSHPKVGYTTMLYMRSEMIYHQAYYLAMAMAISIRYSAVRRQGEIKPGTQEVQILDYQTQQYRIFPGLARCFAFNTAAATVRQMTENCIKQLSHGNSDVLADLHALSCGLKAVVTHQASQSIDQARQACGGHGYSDASYLPTLYTCSVGACTYEGENMVMLLQLSKYLMKAAAKAEKGEEMAPLVAYLVKPDITETNDKFAKMLSHFEHIARHRVMHAYRQMIEEEKQGIERDYAFANHSVDWTKAARAHTKLFIARGFVKSVQEVSDEAVHDVLTTLAELYLSYELIEMSADLTANGYLSESDVQQIRHQIYDSMRKTRRNAVSIVDSFDICDRELRSVLGRRDGHVYENLYKWAQMSPLNERNLPHVEKYLKPMTSKL.

FAD-binding positions include 148–151 (YAQT), 156–157 (GT), and G190. Substrate contacts are provided by residues 284-287 (KVGY) and R294. FAD-binding positions include R319 and 339–342 (QQYR). ATP contacts are provided by H395 and Q403. Position 410 (G410) interacts with FAD. Residue 432–433 (YE) coordinates substrate. E433 functions as the Proton acceptor in the catalytic mechanism. E435 contacts FAD. 524-527 (KAAR) lines the ATP pocket. The Microbody targeting signal motif lies at 657–659 (SKL).

This sequence belongs to the acyl-CoA oxidase family. Homodimer. FAD is required as a cofactor.

It localises to the peroxisome. The protein operates within lipid metabolism; peroxisomal fatty acid beta-oxidation. With respect to regulation, activated by ATP. ATP binding leads to a conformational change that promotes FAD cofactor binding and enzyme activity. ATP binding likely occurs during acox-1.5 folding and/or dimer formation. Its function is as follows. Involved in the first step of peroxisomal beta-oxidation by catalyzing the desaturation of fatty acid-derived side chains. This Caenorhabditis elegans protein is Probable acyl-coenzyme A oxidase acox-1.5.